The chain runs to 301 residues: UDP-N-acetylenolpyruvoylglucosamine reductase 1 (301 aa).

In terms of domain architecture, FAD-binding PCMH-type spans 29–196; it reads KIGGPADILI…LEAVFQLQAG (168 aa). Arg-174 is a catalytic residue. The Proton donor role is filled by Ser-225. Glu-295 is an active-site residue.

The protein belongs to the MurB family. The cofactor is FAD.

The protein localises to the cytoplasm. The catalysed reaction is UDP-N-acetyl-alpha-D-muramate + NADP(+) = UDP-N-acetyl-3-O-(1-carboxyvinyl)-alpha-D-glucosamine + NADPH + H(+). It functions in the pathway cell wall biogenesis; peptidoglycan biosynthesis. Functionally, cell wall formation. The protein is UDP-N-acetylenolpyruvoylglucosamine reductase 1 (murB1) of Bacillus cereus (strain ATCC 14579 / DSM 31 / CCUG 7414 / JCM 2152 / NBRC 15305 / NCIMB 9373 / NCTC 2599 / NRRL B-3711).